The following is a 216-amino-acid chain: Acyl-homoserine-lactone synthase (216 aa).

The protein belongs to the autoinducer synthase family.

It carries out the reaction a fatty acyl-[ACP] + S-adenosyl-L-methionine = an N-acyl-L-homoserine lactone + S-methyl-5'-thioadenosine + holo-[ACP] + H(+). In terms of biological role, required for the synthesis of OHHL (N-(3-oxohexanoyl)-L-homoserine lactone), an autoinducer molecule which binds to CarR and thus acts in the control of the biosynthesis of carbapenem antibiotics. The sequence is that of Acyl-homoserine-lactone synthase (carI) from Pectobacterium carotovorum subsp. carotovorum (Erwinia carotovora subsp. carotovora).